Consider the following 286-residue polypeptide: uncharacterized protein (286 aa).

In terms of domain architecture, HTH lysR-type spans 1–58 (MLLEGIETLLVLSKEKTMSRTGSQLYISQSAVSKRIANLEKKLGKKLIVPAGRHIKLT). The segment at residues 18–37 (MSRTGSQLYISQSAVSKRIA) is a DNA-binding region (H-T-H motif).

The protein belongs to the LysR transcriptional regulatory family.

This is an uncharacterized protein from Vibrio cholerae serotype O1 (strain ATCC 39315 / El Tor Inaba N16961).